A 347-amino-acid polypeptide reads, in one-letter code: Isopentenyl-diphosphate delta-isomerase (347 aa).

9-10 contacts substrate; sequence RK. FMN-binding positions include 65–67, S95, and N124; that span reads AMT. Residue 95 to 97 coordinates substrate; sequence STH. Q154 serves as a coordination point for substrate. E155 provides a ligand contact to Mg(2+). FMN is bound by residues K186, S211, T216, 262-264, and 283-284; these read GVR and SR.

This sequence belongs to the IPP isomerase type 2 family. Homooctamer. Dimer of tetramers. FMN is required as a cofactor. The cofactor is NADPH. Mg(2+) serves as cofactor.

It localises to the cytoplasm. It carries out the reaction isopentenyl diphosphate = dimethylallyl diphosphate. Involved in the biosynthesis of isoprenoids. Catalyzes the 1,3-allylic rearrangement of the homoallylic substrate isopentenyl (IPP) to its allylic isomer, dimethylallyl diphosphate (DMAPP). The protein is Isopentenyl-diphosphate delta-isomerase of Staphylococcus saprophyticus subsp. saprophyticus (strain ATCC 15305 / DSM 20229 / NCIMB 8711 / NCTC 7292 / S-41).